Here is a 338-residue protein sequence, read N- to C-terminus: Electron transfer flavoprotein subunit alpha (338 aa).

Residue 275–303 (IYIACAISGAIQPLAGMTGSDCIIAINKD) coordinates FAD.

Belongs to the ETF alpha-subunit/FixB family. Heterodimer of an alpha and a beta subunit. The cofactor is FAD.

Functionally, the electron transfer flavoprotein serves as a specific electron acceptor for other dehydrogenases. It transfers the electrons to the main respiratory chain via ETF-ubiquinone oxidoreductase (ETF dehydrogenase). This is Electron transfer flavoprotein subunit alpha (etfA) from Megasphaera elsdenii.